Here is a 182-residue protein sequence, read N- to C-terminus: uncharacterized protein (182 aa).

A run of 2 helical transmembrane segments spans residues 76-96 (LLLAMSTLKICPLNLVFLALA) and 114-130 (LDLLFVSLTTTACLIGA).

Its subcellular location is the membrane. This is an uncharacterized protein from Saccharomyces cerevisiae (strain ATCC 204508 / S288c) (Baker's yeast).